The chain runs to 173 residues: HAM34 protein (173 aa).

Low complexity predominate over residues 22-89 (AAPATTPDTA…ADGTQTATAP (68 aa)). The tract at residues 22–155 (AAPATTPDTA…ATDTTSGASH (134 aa)) is disordered. The span at 95-133 (TEESSASGEMTPTVGTDTSDQVSDSTAAGPSTPEGSMTG) shows a compositional bias: polar residues. The segment covering 134–155 (TSTPKASDSSSSATDTTSGASH) has biased composition (low complexity).

Germinating spores.

Its function is as follows. Could be a structural protein required for the infection process of B.lactucae. The sequence is that of HAM34 protein (HAM34) from Bremia lactucae (Lettuce downy mildew).